Consider the following 211-residue polypeptide: uncharacterized protein (211 aa).

This is an uncharacterized protein from Archaeoglobus fulgidus (strain ATCC 49558 / DSM 4304 / JCM 9628 / NBRC 100126 / VC-16).